Here is a 2212-residue protein sequence, read N- to C-terminus: RNA-directed RNA polymerase L (2212 aa).

Residues 30–288 (KDALLSQVHP…SHEENDSLDC (259 aa)) are endonuclease. 3 residues coordinate Mn(2+): glutamate 55, aspartate 93, and glutamate 106. Residue lysine 119 is part of the active site. The tract at residues 922–942 (MKSSDAREERLQDPKRNEKNA) is disordered. Residues 923–942 (KSSDAREERLQDPKRNEKNA) show a composition bias toward basic and acidic residues. One can recognise a RdRp catalytic domain in the interval 1175-1371 (CDMKMAVNNG…YLSSKLNKFV (197 aa)). Mg(2+) is bound at residue aspartate 1333.

The protein belongs to the Bunyavirales RNA polymerase family. Homomultimer; the oligomeric structure is essential for the polymerase activity. Interacts with nucleoprotein N. Interacts with protein Z; this interaction inhibits viral transcription and replication, Z partially blocks the product exit tunnel for the releasing nascent RNA product. Requires Mn(2+) as cofactor. Mg(2+) is required as a cofactor.

It is found in the virion. It localises to the host cytoplasm. The catalysed reaction is RNA(n) + a ribonucleoside 5'-triphosphate = RNA(n+1) + diphosphate. In terms of biological role, RNA-dependent RNA polymerase, which is responsible for the replication and transcription of the viral RNA genome using antigenomic RNA as an intermediate. During transcription, synthesizes subgenomic RNAs and assures their capping by a cap-snatching mechanism, which involves the endonuclease activity cleaving the host capped pre-mRNAs. These short capped RNAs are then used as primers for viral transcription. The 3'-end of subgenomic mRNAs molecules are heterogeneous and not polyadenylated. The replicase function is to direct synthesis of antigenomic and genomic RNA which are encapsidated and non capped. As a consequence of the use of the same enzyme for both transcription and replication, these mechanisms need to be well coordinated. These processes may be regulated by proteins N and Z in a dose-dependent manner. Z protein inhibits the viral polymerase L und thus the viral transcription and RNA synthesis. The chain is RNA-directed RNA polymerase L from Sabia mammarenavirus (isolate Human/Brasil/SPH114202/1990) (SABV).